Consider the following 118-residue polypeptide: Ribosome-binding factor A (118 aa).

It belongs to the RbfA family. In terms of assembly, monomer. Binds 30S ribosomal subunits, but not 50S ribosomal subunits or 70S ribosomes.

The protein localises to the cytoplasm. Functionally, one of several proteins that assist in the late maturation steps of the functional core of the 30S ribosomal subunit. Associates with free 30S ribosomal subunits (but not with 30S subunits that are part of 70S ribosomes or polysomes). Required for efficient processing of 16S rRNA. May interact with the 5'-terminal helix region of 16S rRNA. In Geobacter sulfurreducens (strain ATCC 51573 / DSM 12127 / PCA), this protein is Ribosome-binding factor A.